Here is a 129-residue protein sequence, read N- to C-terminus: MKYFVVALALVAAFACIAESKPAESEHELAEVEEENELADLEDAVWLEHLADLSDLEEARGFFGNTWKKIKGKADKIMLKKAVKIMVKKEGISKEEAQAKVDAMSKKQIRLYLLKHYGKKALQKASEKL.

A signal peptide spans 1–20; that stretch reads MKYFVVALALVAAFACIAES. Positions 21–60 are excised as a propeptide; it reads KPAESEHELAEVEEENELADLEDAVWLEHLADLSDLEEAR. Residues 57 to 60 carry the Processing quadruplet motif motif; the sequence is EEAR.

Cleavage of the propeptide depends on the processing quadruplet motif (XXXR, with at least one of X being E). As to expression, expressed by the venom gland.

Its subcellular location is the secreted. Insecticidal, cytolytic and antimicrobial peptide. Has insecticidal activity against the flesh fly S.carnaria. Has antibacterial activity against the Gram-negative bacteria E.coli. Forms voltage-dependent, ion-permeable channels in membranes. At high concentration causes cell membrane lysis. This Lachesana tarabaevi (Spider) protein is M-zodatoxin-Lt8f (cit 1-7).